The sequence spans 380 residues: Cytochrome b (380 aa).

4 helical membrane passes run 33 to 53, 77 to 98, 113 to 133, and 178 to 198; these read FGSL…FLAM, WLIR…FLHV, WNMG…GYVL, and FFAF…VHLL. Residues histidine 83 and histidine 97 each coordinate heme b. Histidine 182 and histidine 196 together coordinate heme b. Histidine 201 contacts a ubiquinone. 4 helical membrane-spanning segments follow: residues 226 to 246, 288 to 308, 320 to 340, and 347 to 367; these read IKDF…TLFF, LGGV…PLLH, ITQT…WIGG, and FIII…ILMP.

This sequence belongs to the cytochrome b family. As to quaternary structure, the cytochrome bc1 complex contains 11 subunits: 3 respiratory subunits (MT-CYB, CYC1 and UQCRFS1), 2 core proteins (UQCRC1 and UQCRC2) and 6 low-molecular weight proteins (UQCRH/QCR6, UQCRB/QCR7, UQCRQ/QCR8, UQCR10/QCR9, UQCR11/QCR10 and a cleavage product of UQCRFS1). This cytochrome bc1 complex then forms a dimer. Heme b is required as a cofactor.

The protein resides in the mitochondrion inner membrane. Component of the ubiquinol-cytochrome c reductase complex (complex III or cytochrome b-c1 complex) that is part of the mitochondrial respiratory chain. The b-c1 complex mediates electron transfer from ubiquinol to cytochrome c. Contributes to the generation of a proton gradient across the mitochondrial membrane that is then used for ATP synthesis. This is Cytochrome b (MT-CYB) from Microtus guentheri (Gunther's vole).